The primary structure comprises 340 residues: Heat-inducible transcription repressor HrcA (340 aa).

It belongs to the HrcA family.

In terms of biological role, negative regulator of class I heat shock genes (grpE-dnaK-dnaJ and groELS operons). Prevents heat-shock induction of these operons. The sequence is that of Heat-inducible transcription repressor HrcA from Mycoplasma mycoides subsp. mycoides SC (strain CCUG 32753 / NCTC 10114 / PG1).